Here is a 198-residue protein sequence, read N- to C-terminus: Probable GTP-binding protein EngB (198 aa).

The region spanning 21–195 is the EngB-type G domain; sequence NIPEVCFVGR…YDALIRLLEV (175 aa). Residues 29-36, 56-60, 75-78, 142-145, and 174-176 contribute to the GTP site; these read GRSNVGKS, GKTRL, DAPG, TKLD, and VSN. Residues Ser36 and Thr58 each contribute to the Mg(2+) site.

This sequence belongs to the TRAFAC class TrmE-Era-EngA-EngB-Septin-like GTPase superfamily. EngB GTPase family. Mg(2+) is required as a cofactor.

In terms of biological role, necessary for normal cell division and for the maintenance of normal septation. The sequence is that of Probable GTP-binding protein EngB from Mesoplasma florum (strain ATCC 33453 / NBRC 100688 / NCTC 11704 / L1) (Acholeplasma florum).